A 361-amino-acid polypeptide reads, in one-letter code: Ribosomal RNA large subunit methyltransferase M (361 aa).

Residues Ser186, 219–222 (CPGG), Asp238, Asp258, and Asp275 each bind S-adenosyl-L-methionine. Residue Lys304 is the Proton acceptor of the active site.

This sequence belongs to the class I-like SAM-binding methyltransferase superfamily. RNA methyltransferase RlmE family. RlmM subfamily. As to quaternary structure, monomer.

The protein localises to the cytoplasm. The catalysed reaction is cytidine(2498) in 23S rRNA + S-adenosyl-L-methionine = 2'-O-methylcytidine(2498) in 23S rRNA + S-adenosyl-L-homocysteine + H(+). Catalyzes the 2'-O-methylation at nucleotide C2498 in 23S rRNA. This is Ribosomal RNA large subunit methyltransferase M from Pseudoalteromonas translucida (strain TAC 125).